We begin with the raw amino-acid sequence, 221 residues long: MQAFAVAALSIWLCLGATTLAESHGPQHCTSPNMTGVLTVLALTGGEIKATGHYSYDSTDKKIRFTESEMHLNKTEHLEDYLMLFEEGVFYDIDMKNQSCKKMSLHSHAHALELPAGAAHQVELFLGSDTVQEEDIKVNIWTGSVPETKGQYFLSTTVGECLPLSTFYSTDSITLLFSNSEVVTEVKAPEVFNLPSFCEGVELEEAPEGQKNDFFSLFNSV.

The first 21 residues, 1 to 21 (MQAFAVAALSIWLCLGATTLA), serve as a signal peptide directing secretion. 3 N-linked (GlcNAc...) asparagine glycosylation sites follow: N33, N73, and N97.

This sequence belongs to the ependymin family. In terms of processing, binds calcium through the terminal sialic acids. EPDs are synthesized in the meninx and secreted in the cerebrospinal fluid.

The protein resides in the secreted. In terms of biological role, may play a role in neural plasticity. May be involved during axon regeneration. The sequence is that of Ependymin-1 (epd1) from Oncorhynchus mykiss (Rainbow trout).